The sequence spans 432 residues: NADH-quinone oxidoreductase subunit D (432 aa).

Belongs to the complex I 49 kDa subunit family. NDH-1 is composed of 14 different subunits. Subunits NuoB, C, D, E, F, and G constitute the peripheral sector of the complex.

The protein resides in the cell membrane. It carries out the reaction a quinone + NADH + 5 H(+)(in) = a quinol + NAD(+) + 4 H(+)(out). Functionally, NDH-1 shuttles electrons from NADH, via FMN and iron-sulfur (Fe-S) centers, to quinones in the respiratory chain. The immediate electron acceptor for the enzyme in this species is believed to be a menaquinone. Couples the redox reaction to proton translocation (for every two electrons transferred, four hydrogen ions are translocated across the cytoplasmic membrane), and thus conserves the redox energy in a proton gradient. The sequence is that of NADH-quinone oxidoreductase subunit D from Mycobacterium marinum (strain ATCC BAA-535 / M).